Here is a 229-residue protein sequence, read N- to C-terminus: Large ribosomal subunit protein uL1 (229 aa).

Belongs to the universal ribosomal protein uL1 family. In terms of assembly, part of the 50S ribosomal subunit.

In terms of biological role, binds directly to 23S rRNA. The L1 stalk is quite mobile in the ribosome, and is involved in E site tRNA release. Protein L1 is also a translational repressor protein, it controls the translation of the L11 operon by binding to its mRNA. In Desulforamulus reducens (strain ATCC BAA-1160 / DSM 100696 / MI-1) (Desulfotomaculum reducens), this protein is Large ribosomal subunit protein uL1.